Consider the following 239-residue polypeptide: Probable transcriptional regulatory protein EF_2866 (239 aa).

This sequence belongs to the TACO1 family. YeeN subfamily.

It localises to the cytoplasm. This Enterococcus faecalis (strain ATCC 700802 / V583) protein is Probable transcriptional regulatory protein EF_2866.